We begin with the raw amino-acid sequence, 447 residues long: Alpha-1,6-mannosyl-glycoprotein 2-beta-N-acetylglucosaminyltransferase (447 aa).

Residues 1–9 lie on the Cytoplasmic side of the membrane; that stretch reads MRFRIYKRK. A helical; Signal-anchor for type II membrane protein membrane pass occupies residues 10–29; that stretch reads VLILTLVVAACGFVLWSSNG. At 30 to 447 the chain is on the lumenal side; the sequence is RQRKNEALAP…ELCKSYRRLQ (418 aa). 2 N-linked (GlcNAc...) asparagine glycosylation sites follow: asparagine 69 and asparagine 86. Residues 123–127 and aspartate 154 contribute to the substrate site; that span reads QVHNR. Cysteine 196 and cysteine 210 are oxidised to a cystine. 229–233 provides a ligand contact to substrate; sequence QTKHH. Aspartate 261 is a binding site for Mn(2+). A disulfide bridge links cysteine 283 with cysteine 286. Arginine 298 serves as a coordination point for substrate. Intrachain disulfides connect cysteine 334/cysteine 357, cysteine 339/cysteine 440, and cysteine 378/cysteine 386. A Mn(2+)-binding site is contributed by histidine 374.

Belongs to the glycosyltransferase 16 (GT16) protein family. In terms of assembly, homodimer. Requires Mn(2+) as cofactor.

It localises to the golgi apparatus membrane. The enzyme catalyses an N(4)-{beta-D-GlcNAc-(1-&gt;2)-alpha-D-Man-(1-&gt;3)-[alpha-D-Man-(1-&gt;6)]-beta-D-Man-(1-&gt;4)-beta-D-GlcNAc-(1-&gt;4)-beta-D-GlcNAc}-L-asparaginyl-[protein] + UDP-N-acetyl-alpha-D-glucosamine = N(4)-{beta-D-GlcNAc-(1-&gt;2)-alpha-D-Man-(1-&gt;3)-[beta-D-GlcNAc-(1-&gt;2)-alpha-D-Man-(1-&gt;6)]-beta-D-Man-(1-&gt;4)-beta-D-GlcNAc-(1-&gt;4)-beta-D-GlcNAc}-L-asparaginyl-[protein] + UDP + H(+). It participates in protein modification; protein glycosylation. In terms of biological role, plays an essential role in protein N-glycosylation. Catalyzes the transfer of N-acetylglucosamine (GlcNAc) onto the free terminal mannose moiety in the core structure of the nascent N-linked glycan chain, giving rise to the second branch in complex glycans. This chain is Alpha-1,6-mannosyl-glycoprotein 2-beta-N-acetylglucosaminyltransferase (MGAT2), found in Homo sapiens (Human).